Here is a 120-residue protein sequence, read N- to C-terminus: Large ribosomal subunit protein bL12 (120 aa).

This sequence belongs to the bacterial ribosomal protein bL12 family. As to quaternary structure, homodimer. Part of the ribosomal stalk of the 50S ribosomal subunit. Forms a multimeric L10(L12)X complex, where L10 forms an elongated spine to which 2 to 4 L12 dimers bind in a sequential fashion. Binds GTP-bound translation factors.

In terms of biological role, forms part of the ribosomal stalk which helps the ribosome interact with GTP-bound translation factors. Is thus essential for accurate translation. The sequence is that of Large ribosomal subunit protein bL12 from Lactobacillus gasseri (strain ATCC 33323 / DSM 20243 / BCRC 14619 / CIP 102991 / JCM 1131 / KCTC 3163 / NCIMB 11718 / NCTC 13722 / AM63).